The sequence spans 354 residues: MFLRSSVSRLLHGQIPCALTRSVHSVAVVGAPFSRGQKKKGVEYGPAAIREAGLLKRLSMLGCHIKDFGDLSFTNVPKDDPYNNLVVYPRSVGIANQELAEVVSRAVSGGYSCVTLGGDHSLAIGTISGHARHHPDLCVIWVDAHADINTPLTTVSGNIHGQPLSFLIRELQDKVPQLPGFSWIKPCLSPPNLVYIGLRDVEPAEHFILKSFDIQYFSMRDIDRLGIQKVMEQTFDRLIGKRKRPIHLSFDIDAFDPKLAPATGTPVVGGLTYREGLYITEEIHSTGLLSALDLVEVNPHLATSEEEAKATASLAVDVIASSFGQTREGGHIAYDHLPTPSSPHESEKEECVRI.

A mitochondrion-targeting transit peptide spans Met1–Ser22. The Mn(2+) site is built by His120, Asp143, His145, and Asp147. Substrate is bound by residues His145–Asn149, Ser156–Asn158, and Glu202. The Mn(2+) site is built by Asp251 and Asp253. 2 residues coordinate substrate: Thr265 and Glu296.

Belongs to the arginase family. As to quaternary structure, homotrimer. It depends on Mn(2+) as a cofactor.

The protein localises to the mitochondrion. The enzyme catalyses L-arginine + H2O = urea + L-ornithine. It participates in nitrogen metabolism; urea cycle; L-ornithine and urea from L-arginine: step 1/1. May play a role in the regulation of extra-urea cycle arginine metabolism and also in down-regulation of nitric oxide synthesis. Extrahepatic arginase functions to regulate L-arginine bioavailability to nitric oxid synthase (NOS). Arginine metabolism is a critical regulator of innate and adaptive immune responses. Seems to be involved in negative regulation of the survival capacity of activated T cells. May suppress inflammation-related signaling in asthmatic airway epithelium. May play a role in promoting prenatal immune suppression. Regulates RPS6KB1 signaling, which promotes endothelial cell senescence and inflammation and implicates NOS3/eNOS dysfunction. Can inhibit endothelial autophagy independently of its enzymatic activity implicating mTORC2 signaling. Involved in vascular smooth muscle cell senescence and apoptosis independently of its enzymatic activity. In Rattus norvegicus (Rat), this protein is Arginase-2, mitochondrial (Arg2).